The following is a 357-amino-acid chain: Protein RecA (357 aa).

69 to 76 (GPESSGKT) serves as a coordination point for ATP. The segment at 337–357 (SANSVAKNNEDDEDEDVEEEE) is disordered. The segment covering 346-357 (EDDEDEDVEEEE) has biased composition (acidic residues).

The protein belongs to the RecA family.

The protein localises to the cytoplasm. Its function is as follows. Can catalyze the hydrolysis of ATP in the presence of single-stranded DNA, the ATP-dependent uptake of single-stranded DNA by duplex DNA, and the ATP-dependent hybridization of homologous single-stranded DNAs. It interacts with LexA causing its activation and leading to its autocatalytic cleavage. This is Protein RecA from Nostoc sp. (strain PCC 7120 / SAG 25.82 / UTEX 2576).